Here is a 288-residue protein sequence, read N- to C-terminus: Phytanoyl-CoA dioxygenase domain-containing protein 1 homolog (288 aa).

2-oxoglutarate-binding positions include Lys-95, Met-134, 149 to 151 (HVD), and Trp-167. Fe cation contacts are provided by His-149 and Asp-151. His-242 contacts Fe cation. Positions 244 and 253 each coordinate 2-oxoglutarate.

This sequence belongs to the PhyH family. PHYHD1 subfamily. It depends on Fe cation as a cofactor.

In terms of biological role, has alpha-ketoglutarate-dependent dioxygenase activity. Does not show detectable activity towards fatty acid CoA thioesters. Is not expected to be active with phytanoyl CoA. The sequence is that of Phytanoyl-CoA dioxygenase domain-containing protein 1 homolog from Caenorhabditis elegans.